The primary structure comprises 238 residues: Ubiquinone biosynthesis O-methyltransferase (238 aa).

S-adenosyl-L-methionine contacts are provided by arginine 38, glycine 57, aspartate 78, and leucine 124.

This sequence belongs to the methyltransferase superfamily. UbiG/COQ3 family.

The enzyme catalyses a 3-demethylubiquinol + S-adenosyl-L-methionine = a ubiquinol + S-adenosyl-L-homocysteine + H(+). It catalyses the reaction a 3-(all-trans-polyprenyl)benzene-1,2-diol + S-adenosyl-L-methionine = a 2-methoxy-6-(all-trans-polyprenyl)phenol + S-adenosyl-L-homocysteine + H(+). The protein operates within cofactor biosynthesis; ubiquinone biosynthesis. Functionally, O-methyltransferase that catalyzes the 2 O-methylation steps in the ubiquinone biosynthetic pathway. In Marinobacter nauticus (strain ATCC 700491 / DSM 11845 / VT8) (Marinobacter aquaeolei), this protein is Ubiquinone biosynthesis O-methyltransferase.